We begin with the raw amino-acid sequence, 168 residues long: Type-2 ice-structuring protein (168 aa).

Residues 1–17 form the signal peptide; that stretch reads MLTVSLLVCAMMALTQA. The propeptide occupies 18 to 34; that stretch reads DHDGVLKGTATEAGEVS. 5 disulfides stabilise this stretch: Cys45–Cys56, Cys73–Cys163, Cys107–Cys138, Cys127–Cys149, and Cys139–Cys155. One can recognise a C-type lectin domain in the interval 52–164; it reads HGQRCFYSEA…CPASHASICA (113 aa).

The protein resides in the secreted. In terms of biological role, has antifreeze activity to protect fish blood from freezing at subzero sea water temperatures. Binds to ice crystals and inhibits their growth. The thermal hysteresis (TH) activity, the ability to lower the blood freezing point, is approximately 0.45 degrees Celsius at 0.15 mM for this protein. This Brachyopsis segaliensis (Sea poacher) protein is Type-2 ice-structuring protein.